We begin with the raw amino-acid sequence, 743 residues long: Fork head transcription factor 1 (743 aa).

The FHA domain maps to 39–94 (VTMGRKASNSSDCDVHLGDTKAISRQHAKIFYSFPNQRFEISVMGKNGAFVDGEFV). 3 disordered regions span residues 214–291 (QPPK…ATQK), 411–450 (GISA…LQNG), and 529–743 (QMQG…SSYT). The segment covering 221–230 (VSPSSIQRLS) has biased composition (polar residues). Residues 291–385 (KPNLSYANLI…EGNFFRRTKK (95 aa)) constitute a DNA-binding region (fork-head). The segment covering 434-443 (SRGENVEDRP) has biased composition (basic and acidic residues). Residues 529 to 539 (QMQGPQQVQQQ) show a composition bias toward low complexity. Residues 562–576 (NITSPSPSISVTQRP) show a composition bias toward polar residues. Positions 614-624 (SAGPSSVRSSS) are enriched in low complexity. Composition is skewed to polar residues over residues 625-643 (YNST…QNLH), 670-686 (TGNQ…ASSF), and 695-726 (ENGS…NSSD).

It is found in the nucleus. In terms of biological role, acts as a transcriptional activator for ribosomal protein genes (RPG) that contain a HomolE UAS (upstream activating sequence) in addition to a HomolD promoter element; HomolD plays the role of a TATA box in RPG promoters that do not contain a canonical TATA sequence. Binds to HomolE elements with consensus sequence 3'-ACCCTACCCT-5' (or its inverted form AGGGTAGGGT). The polypeptide is Fork head transcription factor 1 (Schizosaccharomyces pombe (strain 972 / ATCC 24843) (Fission yeast)).